Here is an 89-residue protein sequence, read N- to C-terminus: Dolichol-phosphate mannose synthase subunit 3 (89 aa).

2 helical membrane-spanning segments follow: residues Ile7–Ile27 and Trp33–Val53.

This sequence belongs to the DPM3 family. In terms of assembly, component of the dolichol-phosphate mannose (DPM) synthase complex composed of DPMS1, DPMS2 and DPMS3; in the complex interacts directly with DPMS1 and DPMS2.

The protein resides in the endoplasmic reticulum membrane. It participates in protein modification; protein glycosylation. Regulates the biosynthesis of dolichol phosphate-mannose. Regulatory subunit of the dolichol-phosphate mannose (DPM) synthase complex; essential for the ER localization and stable expression of DPMS1. This is Dolichol-phosphate mannose synthase subunit 3 from Arabidopsis thaliana (Mouse-ear cress).